The sequence spans 113 residues: uncharacterized protein (113 aa).

Residues 16–96 form a CHY-type; degenerate zinc finger; the sequence is LVDNETRCFH…STVHCKYCNH (81 aa). C23, H25, C46, C49, C73, C76, C91, and C94 together coordinate Zn(2+).

The protein resides in the cytoplasm. The protein localises to the nucleus. This is an uncharacterized protein from Schizosaccharomyces pombe (strain 972 / ATCC 24843) (Fission yeast).